A 131-amino-acid chain; its full sequence is D-ribose pyranase (131 aa).

The active-site Proton donor is H20. Residues D28, H98, and 120–122 (YAN) each bind substrate.

The protein belongs to the RbsD / FucU family. RbsD subfamily. In terms of assembly, homodecamer.

The protein resides in the cytoplasm. The enzyme catalyses beta-D-ribopyranose = beta-D-ribofuranose. The protein operates within carbohydrate metabolism; D-ribose degradation; D-ribose 5-phosphate from beta-D-ribopyranose: step 1/2. Catalyzes the interconversion of beta-pyran and beta-furan forms of D-ribose. In Clostridium tetani (strain Massachusetts / E88), this protein is D-ribose pyranase.